The chain runs to 89 residues: Small ribosomal subunit protein uS19 (89 aa).

Belongs to the universal ribosomal protein uS19 family.

Its function is as follows. Protein S19 forms a complex with S13 that binds strongly to the 16S ribosomal RNA. The chain is Small ribosomal subunit protein uS19 from Stenotrophomonas maltophilia (strain K279a).